The primary structure comprises 639 residues: Coiled-coil domain-containing protein 27 (639 aa).

Residues 154–176 (YPRKRSEPSDPSPTGSPTVVKKS) are disordered. Residues 203-242 (QRFSEMESQMQKKDQEILTLQKEKEALKKQLKNLLRGKGT) adopt a coiled-coil conformation. Residues 291–385 (ESSKELHVEP…EECHPKRSYS (95 aa)) are disordered. Positions 292 to 309 (SSKELHVEPGSAIEEKSS) are enriched in basic and acidic residues. Over residues 310 to 320 (EGPPEEAAAAK) the composition is skewed to low complexity. Composition is skewed to acidic residues over residues 336-350 (GPEE…EVEG) and 358-369 (EGEILVNEEEAS). The span at 370–380 (WELREDEECHP) shows a compositional bias: basic and acidic residues.

This Mus musculus (Mouse) protein is Coiled-coil domain-containing protein 27 (Ccdc27).